A 373-amino-acid chain; its full sequence is Chaperone protein DnaJ (373 aa).

In terms of domain architecture, J spans 5–70; sequence CYYEVLEVSR…EKRSRYDRFG (66 aa). A CR-type zinc finger spans residues 134-212; the sequence is GTEVELNIPV…CRGAGYVRKQ (79 aa). Zn(2+)-binding residues include cysteine 147, cysteine 150, cysteine 164, cysteine 167, cysteine 186, cysteine 189, cysteine 200, and cysteine 203. 4 CXXCXGXG motif repeats span residues 147-154, 164-171, 186-193, and 200-207; these read CDTCEGSG, CSHCGGRG, CPACNGRG, and CSECRGAG.

This sequence belongs to the DnaJ family. As to quaternary structure, homodimer. It depends on Zn(2+) as a cofactor.

The protein localises to the cytoplasm. Participates actively in the response to hyperosmotic and heat shock by preventing the aggregation of stress-denatured proteins and by disaggregating proteins, also in an autonomous, DnaK-independent fashion. Unfolded proteins bind initially to DnaJ; upon interaction with the DnaJ-bound protein, DnaK hydrolyzes its bound ATP, resulting in the formation of a stable complex. GrpE releases ADP from DnaK; ATP binding to DnaK triggers the release of the substrate protein, thus completing the reaction cycle. Several rounds of ATP-dependent interactions between DnaJ, DnaK and GrpE are required for fully efficient folding. Also involved, together with DnaK and GrpE, in the DNA replication of plasmids through activation of initiation proteins. In Maridesulfovibrio salexigens (strain ATCC 14822 / DSM 2638 / NCIMB 8403 / VKM B-1763) (Desulfovibrio salexigens), this protein is Chaperone protein DnaJ.